We begin with the raw amino-acid sequence, 355 residues long: Class E basic helix-loop-helix protein 22 (355 aa).

Disordered regions lie at residues A34–G90 and G128–K215. Composition is skewed to gly residues over residues G81–G90 and G185–S207. The 55-residue stretch at A216 to Q270 folds into the bHLH domain.

Interacts with PRDM8. In terms of tissue distribution, brain-specific, with the highest expression in the cerebellum.

It localises to the nucleus. In terms of biological role, inhibits DNA binding of TCF3/E47 homodimers and TCF3 (E47)/NEUROD1 heterodimers and acts as a strong repressor of Neurod1 and Myod-responsive genes, probably by heterodimerization with class a basic helix-loop-helix factors. Despite the presence of an intact basic domain, does not bind to DNA. In the brain, may function as an area-specific transcription factor that regulates the postmitotic acquisition of area identities and elucidate the genetic hierarchy between progenitors and postmitotic neurons driving neocortical arealization. May be required for the survival of a specific population of inhibitory neurons in the superficial laminae of the spinal cord dorsal horn that may regulate pruritis. Seems to play a crucial role in the retinogenesis, in the specification of amacrine and bipolar subtypes. Forms with PRDM8 a transcriptional repressor complex controlling genes involved in neural development and neuronal differentiation. The chain is Class E basic helix-loop-helix protein 22 (Bhlhe22) from Mus musculus (Mouse).